A 265-amino-acid chain; its full sequence is Energy-coupling factor transporter transmembrane protein EcfT (265 aa).

The next 6 membrane-spanning stretches (helical) occupy residues 29 to 49 (VMAF…ALMF), 63 to 83 (FLFF…TLLL), 94 to 114 (LVDL…AMMF), 117 to 137 (FVLI…IELT), 143 to 163 (ILAP…MLSI), and 243 to 263 (RFAD…LFWL).

Belongs to the energy-coupling factor EcfT family. Forms a stable energy-coupling factor (ECF) transporter complex composed of 2 membrane-embedded substrate-binding proteins (S component), 2 ATP-binding proteins (A component) and 2 transmembrane proteins (T component). May be able to interact with more than 1 S component at a time.

It is found in the cell membrane. In terms of biological role, transmembrane (T) component of an energy-coupling factor (ECF) ABC-transporter complex. Unlike classic ABC transporters this ECF transporter provides the energy necessary to transport a number of different substrates. This is Energy-coupling factor transporter transmembrane protein EcfT from Listeria innocua serovar 6a (strain ATCC BAA-680 / CLIP 11262).